Here is a 286-residue protein sequence, read N- to C-terminus: Zinc finger protein ZAT5 (286 aa).

3 disordered regions span residues 1-28, 40-60, and 131-171; these read MMMG…RSSS, STSS…EYNS, and GGHR…FKVS. The C2H2-type 1 zinc finger occupies 115 to 137; it reads YECKTCNRTFSSFQALGGHRASH. The span at 154–171 shows a compositional bias: polar residues; sequence QPKSSASEEGQNSHFKVS. Residues 190 to 212 form a C2H2-type 2 zinc finger; sequence HECSICGSEFTSGQALGGHMRRH.

As to expression, expressed in flowers and siliques.

The protein localises to the nucleus. Probable transcription factor that may be involved in stress responses. The polypeptide is Zinc finger protein ZAT5 (ZAT5) (Arabidopsis thaliana (Mouse-ear cress)).